The following is a 372-amino-acid chain: Ribosomal RNA small subunit methyltransferase H (372 aa).

Residues 44–46 (GGH), aspartate 63, leucine 97, aspartate 111, and glutamine 118 contribute to the S-adenosyl-L-methionine site. Positions 315-334 (RAAERLDPTAEQRRRTDRER) are enriched in basic and acidic residues. Residues 315-372 (RAAERLDPTAEQRRRTDRERYRRRVRAMHQPGTGSAVRRPTPGDDGTGTDEEGEGHDS) form a disordered region. Residues 361–372 (TGTDEEGEGHDS) are compositionally biased toward acidic residues.

Belongs to the methyltransferase superfamily. RsmH family.

Its subcellular location is the cytoplasm. The catalysed reaction is cytidine(1402) in 16S rRNA + S-adenosyl-L-methionine = N(4)-methylcytidine(1402) in 16S rRNA + S-adenosyl-L-homocysteine + H(+). Its function is as follows. Specifically methylates the N4 position of cytidine in position 1402 (C1402) of 16S rRNA. The polypeptide is Ribosomal RNA small subunit methyltransferase H (Salinispora arenicola (strain CNS-205)).